The following is a 254-amino-acid chain: Alcohol dehydrogenase 2 (254 aa).

10–33 lines the NAD(+) pocket; that stretch reads FVAGLGGIGFDTSREIVKSGPKNL. Ser-138 is a substrate binding site. Catalysis depends on Tyr-151, which acts as the Proton acceptor.

The protein belongs to the short-chain dehydrogenases/reductases (SDR) family. Homodimer.

The catalysed reaction is a primary alcohol + NAD(+) = an aldehyde + NADH + H(+). The enzyme catalyses a secondary alcohol + NAD(+) = a ketone + NADH + H(+). This chain is Alcohol dehydrogenase 2 (Adh2), found in Drosophila mulleri (Fruit fly).